The primary structure comprises 109 residues: Nucleoid-associated protein Caul_4574 (109 aa).

It belongs to the YbaB/EbfC family. As to quaternary structure, homodimer.

It localises to the cytoplasm. Its subcellular location is the nucleoid. Functionally, binds to DNA and alters its conformation. May be involved in regulation of gene expression, nucleoid organization and DNA protection. The sequence is that of Nucleoid-associated protein Caul_4574 from Caulobacter sp. (strain K31).